The following is a 124-amino-acid chain: UPF0102 protein Haur_0145 (124 aa).

It belongs to the UPF0102 family.

In Herpetosiphon aurantiacus (strain ATCC 23779 / DSM 785 / 114-95), this protein is UPF0102 protein Haur_0145.